The primary structure comprises 914 residues: Neuropilin-1 (914 aa).

The first 18 residues, 1-18, serve as a signal peptide directing secretion; sequence MDWGLFLHCAALTFTLSR. Over 20–847 the chain is Extracellular; the sequence is LRSDKCGDTI…PGNVLKTLDP (828 aa). Intrachain disulfides connect Cys25/Cys52, Cys80/Cys102, and Cys145/Cys171. 2 CUB domains span residues 25–139 and 145–263; these read CGDT…YEVF and CSRN…YSVS. Asn148 carries N-linked (GlcNAc...) asparagine glycosylation. Glu193, Asp207, and Asp248 together coordinate Ca(2+). A disulfide bridge connects residues Cys204 and Cys226. Asn259 carries an N-linked (GlcNAc...) asparagine glycan. Intrachain disulfides connect Cys273/Cys422 and Cys429/Cys581. F5/8 type C domains lie at 273–422 and 429–581; these read CMEP…VYGC and CSGM…LLGC. Asn520 carries an N-linked (GlcNAc...) asparagine glycan. O-linked (Xyl...) (chondroitin sulfate) serine; alternate glycosylation occurs at Ser610. An O-linked (Xyl...) (heparan sulfate) serine; alternate glycan is attached at Ser610. Positions 636–801 constitute an MAM domain; that stretch reads PYNLNCGFGW…NHISQEDCQK (166 aa). A disordered region spans residues 809–829; sequence IVEEDPESNQTGFTPSYRTDE. Positions 816-825 are enriched in polar residues; that stretch reads SNQTGFTPSY. An N-linked (GlcNAc...) asparagine glycan is attached at Asn817. Residues 848 to 870 form a helical membrane-spanning segment; that stretch reads ILITIIAMSALGVLLGAICGVVL. The Cytoplasmic portion of the chain corresponds to 871-914; it reads YCACWHNGMSERNLSALENYNFELVDGVKLKKDKLNTQNSYSEA.

This sequence belongs to the neuropilin family. In terms of assembly, homodimer, and heterodimer. Developing nervous system; optic tectum (layers D and E of SGFS), amacrine cells of retina, neurites of dorsal root ganglia. Also expressed in non-neuronal cells, e.g. blood vessels in the entire embryo.

It is found in the mitochondrion membrane. The protein resides in the cell membrane. Receptor involved in the development of the cardiovascular system, in angiogenesis, in the formation of certain neuronal circuits and in organogenesis outside the nervous system. Mediates the chemorepulsant activity of semaphorins. Binding to VEGFA initiates a signaling pathway needed for motor neuron axon guidance and cell body migration, including for the caudal migration of facial motor neurons from rhombomere 4 to rhombomere 6 during embryonic development. Regulates mitochondrial iron transport via interaction. The chain is Neuropilin-1 (NRP1) from Gallus gallus (Chicken).